A 284-amino-acid chain; its full sequence is Origin of replication complex subunit 6 (284 aa).

This sequence belongs to the ORC6 family. In terms of assembly, component of the origin recognition complex (ORC) composed of at least ORC1 (ORC1A or ORC1B), ORC2, ORC3, ORC4, ORC5 and ORC6. ORC is regulated in a cell-cycle and development dependent manner. It is sequentially assembled at the exit from anaphase of mitosis and disassembled as cells enter S phase. Interacts directly with ORC2, ORC3, ORC4 and ORC5. Follow a cell-cycle regulation with a peak at the G1/S-phase. Mostly expressed in siliques, flowers, flower buds and mature leaves, and, to a lower exent, in roots, leaves and stems.

It localises to the nucleus. Functionally, component of the origin recognition complex (ORC) that binds origins of replication. DNA-binding is ATP-dependent. The specific DNA sequences that define origins of replication have not been identified yet. ORC is required to assemble the pre-replication complex necessary to initiate DNA replication. The chain is Origin of replication complex subunit 6 from Arabidopsis thaliana (Mouse-ear cress).